Here is a 695-residue protein sequence, read N- to C-terminus: Follicle-stimulating hormone receptor (695 aa).

Positions 1 to 17 (MALLLVSLLAFLSLGSG) are cleaved as a signal peptide. Disulfide bonds link C18-C25 and C23-C32. Residues 18–46 (CHHRICHCSNRVFLCQESKVTEIPSDLPR) form the LRRNT domain. Topologically, residues 18-366 (CHHRICHCSN…EDIMGYNILR (349 aa)) are extracellular. LRR repeat units follow at residues 49 to 72 (IELR…FGDL), 73 to 97 (EKIE…LPKL), 98 to 118 (HEIR…AFQN), 119 to 143 (LPNL…KIHS), 144 to 169 (LQKV…VGLS), 170 to 192 (FESV…AFNG), 193 to 216 (TQLD…VFHG), 217 to 240 (ASGP…GLEN), and 241 to 259 (LKKL…PTLE). 2 N-linked (GlcNAc...) asparagine glycosylation sites follow: N191 and N199. Cystine bridges form between C275-C346, C276-C292, C276-C356, and C292-C338. 2 N-linked (GlcNAc...) asparagine glycosylation sites follow: N293 and N318. Y335 is modified (sulfotyrosine). A helical membrane pass occupies residues 367 to 387 (VLIWFISILAITGNIIVLVIL). At 388-398 (TTSQYKLTVPR) the chain is on the cytoplasmic side. The chain crosses the membrane as a helical span at residues 399–421 (FLMCNLAFADLCIGIYLLLIASV). Topologically, residues 422 to 443 (DIHTKSQYHNYAIDWQTGAGCD) are extracellular. C442 and C517 are oxidised to a cystine. Residues 444–465 (AAGFFTVFASELSVYTLTAITL) form a helical membrane-spanning segment. The Cytoplasmic segment spans residues 466-485 (ERWHTITHAMQLDCKVQLRH). Residues 486–508 (AASVMVMGWIFAFAAALFPIFGI) form a helical membrane-spanning segment. Residues 509–528 (SSYMKVSICLPMDIDSPLSQ) are Extracellular-facing. Residues 529–550 (LYVMSLLVLNVLAFVVICGCYI) form a helical membrane-spanning segment. Over 551–573 (HIYLTVRNPNIVSSSSDTRIAKR) the chain is Cytoplasmic. Residues 574–597 (MAMLIFTDFLCMAPISFFAISASL) form a helical membrane-spanning segment. The Extracellular portion of the chain corresponds to 598-608 (KVPLITVSKAK). The chain crosses the membrane as a helical span at residues 609 to 630 (ILLVLFHPINSCANPFLYAIFT). Over 631-695 (KNFRRDFFIL…LVPLSHLAQN (65 aa)) the chain is Cytoplasmic.

It belongs to the G-protein coupled receptor 1 family. FSH/LSH/TSH subfamily. In terms of assembly, homotrimer. Functions as a homotrimer binding the FSH hormone heterodimer composed of CGA and FSHB. Interacts with ARRB2. Interacts with APPL2; interaction is independent of follicle stimulating hormone stimulation. In terms of processing, sulfated. N-glycosylated; indirectly required for FSH-binding, possibly via a conformational change that allows high affinity binding of hormone. In terms of tissue distribution, sertoli cells and ovarian granulosa cells.

Its subcellular location is the cell membrane. Its function is as follows. G protein-coupled receptor for follitropin, the follicle-stimulating hormone. Through cAMP production activates the downstream PI3K-AKT and ERK1/ERK2 signaling pathways. This chain is Follicle-stimulating hormone receptor (FSHR), found in Homo sapiens (Human).